The primary structure comprises 191 residues: Nucleoside triphosphate pyrophosphatase (191 aa).

Catalysis depends on D70, which acts as the Proton acceptor.

Belongs to the Maf family. A divalent metal cation serves as cofactor.

The protein resides in the cytoplasm. The catalysed reaction is a ribonucleoside 5'-triphosphate + H2O = a ribonucleoside 5'-phosphate + diphosphate + H(+). The enzyme catalyses a 2'-deoxyribonucleoside 5'-triphosphate + H2O = a 2'-deoxyribonucleoside 5'-phosphate + diphosphate + H(+). In terms of biological role, nucleoside triphosphate pyrophosphatase. May have a dual role in cell division arrest and in preventing the incorporation of modified nucleotides into cellular nucleic acids. The sequence is that of Nucleoside triphosphate pyrophosphatase from Synechococcus sp. (strain WH7803).